A 291-amino-acid polypeptide reads, in one-letter code: N-acetylmannosamine kinase (291 aa).

ATP is bound by residues Ala-5–Lys-12 and Gly-132–Ser-139. His-156, Cys-166, Cys-168, and Cys-173 together coordinate Zn(2+).

The protein belongs to the ROK (NagC/XylR) family. NanK subfamily. As to quaternary structure, homodimer.

It carries out the reaction an N-acyl-D-mannosamine + ATP = an N-acyl-D-mannosamine 6-phosphate + ADP + H(+). It functions in the pathway amino-sugar metabolism; N-acetylneuraminate degradation; D-fructose 6-phosphate from N-acetylneuraminate: step 2/5. Its function is as follows. Catalyzes the phosphorylation of N-acetylmannosamine (ManNAc) to ManNAc-6-P. The sequence is that of N-acetylmannosamine kinase from Escherichia coli (strain 55989 / EAEC).